A 590-amino-acid chain; its full sequence is Tape measure protein (590 aa).

Disordered regions lie at residues 1 to 35 (MKKP…LSGL), 147 to 185 (ESVG…EEKQ), and 515 to 535 (LKKN…EAKQ). Basic and acidic residues predominate over residues 176–185 (PKQESPEEKQ).

The protein resides in the virion. In terms of biological role, serves as a base for tail tube protein polymerization and acts as a template for tail length determination. The chain is Tape measure protein (29) from Escherichia coli (Bacteriophage T4).